Reading from the N-terminus, the 347-residue chain is Anthranilate phosphoribosyltransferase (347 aa).

Residues G88, G91 to D92, T96, N98 to T101, K116 to S124, and S128 each bind 5-phospho-alpha-D-ribose 1-diphosphate. G88 contributes to the anthranilate binding site. A Mg(2+)-binding site is contributed by S100. Anthranilate is bound at residue N119. An anthranilate-binding site is contributed by R174. Mg(2+) is bound by residues D232 and E233.

This sequence belongs to the anthranilate phosphoribosyltransferase family. Homodimer. Mg(2+) is required as a cofactor.

It carries out the reaction N-(5-phospho-beta-D-ribosyl)anthranilate + diphosphate = 5-phospho-alpha-D-ribose 1-diphosphate + anthranilate. The protein operates within amino-acid biosynthesis; L-tryptophan biosynthesis; L-tryptophan from chorismate: step 2/5. In terms of biological role, catalyzes the transfer of the phosphoribosyl group of 5-phosphorylribose-1-pyrophosphate (PRPP) to anthranilate to yield N-(5'-phosphoribosyl)-anthranilate (PRA). This Shewanella sp. (strain MR-7) protein is Anthranilate phosphoribosyltransferase.